Consider the following 448-residue polypeptide: Cytoplasmic tRNA 2-thiolation protein 2 (448 aa).

The protein belongs to the CTU2/NCS2 family.

The protein localises to the cytoplasm. The protein operates within tRNA modification; 5-methoxycarbonylmethyl-2-thiouridine-tRNA biosynthesis. In terms of biological role, plays a central role in 2-thiolation of mcm(5)S(2)U at tRNA wobble positions of tRNA(Lys), tRNA(Glu) and tRNA(Gln). May act by forming a heterodimer with NCS6 that ligates sulfur from thiocarboxylated URM1 onto the uridine of tRNAs at wobble position. Prior mcm(5) tRNA modification by the elongator complex is required for 2-thiolation. May also be involved in protein urmylation. In Scheffersomyces stipitis (strain ATCC 58785 / CBS 6054 / NBRC 10063 / NRRL Y-11545) (Yeast), this protein is Cytoplasmic tRNA 2-thiolation protein 2.